The primary structure comprises 853 residues: DNA mismatch repair protein MutS (853 aa).

613-620 (GPNMGGKS) provides a ligand contact to ATP.

It belongs to the DNA mismatch repair MutS family.

Its function is as follows. This protein is involved in the repair of mismatches in DNA. It is possible that it carries out the mismatch recognition step. This protein has a weak ATPase activity. The polypeptide is DNA mismatch repair protein MutS (Vibrio campbellii (strain ATCC BAA-1116)).